A 325-amino-acid polypeptide reads, in one-letter code: Brain mitochondrial carrier protein 1 (325 aa).

Transmembrane regions (helical) follow at residues 38 to 54 (GLNW…SIVA), 112 to 128 (LRQA…YQSL), 141 to 161 (LLIN…IANP), 199 to 215 (GVVP…GVEL), 240 to 256 (VSSF…SNPV), and 298 to 315 (GFWP…IFFI). 3 Solcar repeats span residues 42–131 (KPFV…LKRL), 139–224 (ETLL…TKKH), and 233–323 (DTIL…LKRL).

The protein belongs to the mitochondrial carrier (TC 2.A.29) family. In terms of assembly, homotetramer. In terms of tissue distribution, mainly expressed in brain. Some expression in testis and pituitary.

It localises to the mitochondrion inner membrane. The enzyme catalyses sulfite(in) + sulfate(out) = sulfite(out) + sulfate(in). It catalyses the reaction thiosulfate(in) + sulfate(out) = thiosulfate(out) + sulfate(in). It carries out the reaction sulfate(out) + phosphate(in) = sulfate(in) + phosphate(out). The catalysed reaction is oxalate(in) + sulfate(out) = oxalate(out) + sulfate(in). The enzyme catalyses malonate(in) + sulfate(out) = malonate(out) + sulfate(in). It catalyses the reaction maleate(in) + sulfate(out) = maleate(out) + sulfate(in). It carries out the reaction (S)-malate(in) + sulfate(out) = (S)-malate(out) + sulfate(in). The catalysed reaction is (3S)-citramalate(in) + sulfate(out) = (3S)-citramalate(out) + sulfate(in). The enzyme catalyses (3R)-citramalate(in) + sulfate(out) = (3R)-citramalate(out) + sulfate(in). It catalyses the reaction sulfate(out) + succinate(in) = sulfate(in) + succinate(out). It carries out the reaction (S,S)-tartrate(in) + sulfate(out) = (S,S)-tartrate(out) + sulfate(in). The catalysed reaction is (2R,3R)-tartrate(in) + sulfate(out) = (2R,3R)-tartrate(out) + sulfate(in). The enzyme catalyses D-aspartate(in) + sulfate(out) = D-aspartate(out) + sulfate(in). It catalyses the reaction L-aspartate(in) + sulfate(out) = L-aspartate(out) + sulfate(in). It carries out the reaction sulfate(in) = sulfate(out). The catalysed reaction is phosphate(in) = phosphate(out). The enzyme catalyses (S)-malate(out) = (S)-malate(in). It catalyses the reaction citrate(in) = citrate(out). It carries out the reaction L-aspartate(out) = L-aspartate(in). The catalysed reaction is L-glutamate(out) = L-glutamate(in). The enzyme catalyses H(+)(in) = H(+)(out). It catalyses the reaction chloride(in) = chloride(out). Its activity is regulated as follows. Increased activity at pH lower than 8.0. sulfate/sulfate exchange activity is inhibited strongly by pyridoxal 5'-phosphate, bathophenanthroline and the organic mercurials mersalyl, p-chloromercuribenzoate and HgCl2. Proton conductance is activated by cardiolipin and long-chain free fatty acids and inhibited by purine nucleotides ATP and ADP. Chloride ion transporter activity is inhibited by long-chain free fatty acids. Functionally, transports inorganic anions (sulfate, sulfite, thiosulfate and phosphate) and, to a lesser extent, a variety of dicarboxylates (e.g. malonate, malate and citramalate) and, even more so, aspartate and glutamate and tricarboxylates. May catalyze the export of sulfite and thiosulfate (the hydrogen sulfide degradation products) from the mitochondria, thereby modulating the level of the hydrogen sulfide. Also can mediate a very low unidirectional transport of anions including sulfate, phosphate, (S)-malate, citrate, L-aspartate and L-glutamate. Maintains oxidative balance (through uncoupling activities) and ATP production (by modifying mitochondrial membrane potential). Is able to transport protons across lipid membranes. Also exhibits transmembrane chloride transport activity to a lesser extent. May modify mitochondrial respiratory efficiency and mitochondrial oxidant production. This is Brain mitochondrial carrier protein 1 from Homo sapiens (Human).